A 285-amino-acid polypeptide reads, in one-letter code: Bifunctional protein FolD (285 aa).

Residues 166 to 168 (GAS) and isoleucine 232 each bind NADP(+).

The protein belongs to the tetrahydrofolate dehydrogenase/cyclohydrolase family. Homodimer.

The enzyme catalyses (6R)-5,10-methylene-5,6,7,8-tetrahydrofolate + NADP(+) = (6R)-5,10-methenyltetrahydrofolate + NADPH. The catalysed reaction is (6R)-5,10-methenyltetrahydrofolate + H2O = (6R)-10-formyltetrahydrofolate + H(+). The protein operates within one-carbon metabolism; tetrahydrofolate interconversion. In terms of biological role, catalyzes the oxidation of 5,10-methylenetetrahydrofolate to 5,10-methenyltetrahydrofolate and then the hydrolysis of 5,10-methenyltetrahydrofolate to 10-formyltetrahydrofolate. This is Bifunctional protein FolD from Photobacterium profundum (strain SS9).